The sequence spans 478 residues: Zinc metalloproteinase/disintegrin (478 aa).

An N-terminal signal peptide occupies residues 1–20; that stretch reads MIQVLLVTICLAAFPYQGSS. A propeptide spanning residues 21 to 187 is cleaved from the precursor; the sequence is IILESGNVND…PIKKASHLNL (167 aa). The region spanning 193–389 is the Peptidase M12B domain; it reads RYVEIVIVVD…QKPQCILKKP (197 aa). 3 disulfides stabilise this stretch: C304-C384, C344-C368, and C346-C351. H329 serves as a coordination point for Zn(2+). The active site involves E330. H333 and H339 together coordinate Zn(2+). The propeptide occupies 390 to 408; it reads LRTDTVSTPVSGNELLEAR. The Disintegrin domain maps to 397 to 478; it reads TPVSGNELLE…ADCPRNVLYG (82 aa). 6 disulfides stabilise this stretch: C411–C420, C413–C421, C426–C440, C434–C464, C439–C443, and C452–C471. Residues 474–478 constitute a propeptide that is removed on maturation; sequence NVLYG.

Belongs to the venom metalloproteinase (M12B) family. P-II subfamily. P-IIa sub-subfamily. Zn(2+) is required as a cofactor. Expressed by the venom gland.

It is found in the secreted. Snake venom zinc metalloproteinase that causes hemorrhage by provoking the degradation of the sub-endothelial matrix proteins (fibronectin, laminin, type IV collagen, nidogen, and gelatins). Functionally, displays low cytotoxicity. In vitro, inhibits cancer cell migration (human breast cancer cell line MDA-MB-231) with a significant rate after 24 hours of incubation. The polypeptide is Zinc metalloproteinase/disintegrin (MPII) (Crotalus durissus collilineatus (Brazilian rattlesnake)).